We begin with the raw amino-acid sequence, 177 residues long: GTP-dependent dephospho-CoA kinase (177 aa).

7 residues coordinate GTP: D48, V49, V50, D67, K69, E124, and D147.

The protein belongs to the GTP-dependent DPCK family.

It carries out the reaction 3'-dephospho-CoA + GTP = GDP + CoA + H(+). Its pathway is cofactor biosynthesis; coenzyme A biosynthesis. Its function is as follows. Catalyzes the GTP-dependent phosphorylation of the 3'-hydroxyl group of dephosphocoenzyme A to form coenzyme A (CoA). The polypeptide is GTP-dependent dephospho-CoA kinase (Thermococcus onnurineus (strain NA1)).